The following is a 309-amino-acid chain: Ribosomal RNA small subunit methyltransferase H (309 aa).

Residues 33 to 35 (GGH), aspartate 53, phenylalanine 79, aspartate 100, and glutamine 107 each bind S-adenosyl-L-methionine.

The protein belongs to the methyltransferase superfamily. RsmH family.

The protein resides in the cytoplasm. It catalyses the reaction cytidine(1402) in 16S rRNA + S-adenosyl-L-methionine = N(4)-methylcytidine(1402) in 16S rRNA + S-adenosyl-L-homocysteine + H(+). Specifically methylates the N4 position of cytidine in position 1402 (C1402) of 16S rRNA. This is Ribosomal RNA small subunit methyltransferase H from Clostridium botulinum (strain Kyoto / Type A2).